The chain runs to 131 residues: Classical arabinogalactan protein 1 (131 aa).

Residues Met-1–Ala-22 form the signal peptide. The interval Ala-22–Val-110 is disordered. The span at Ala-50–Ser-60 shows a compositional bias: pro residues. Residues Pro-61 to Ser-72 show a composition bias toward low complexity. Gly-108 carries GPI-anchor amidated glycine lipidation. Positions Ala-109–Ile-131 are cleaved as a propeptide — removed in mature form.

It belongs to the classical AGP family. In terms of processing, O-glycosylated on the hydroxyproline residues. In terms of tissue distribution, predominantly expressed in flowers and at a lower level in roots and leaves.

Its subcellular location is the cell membrane. Proteoglycan that seems to be implicated in diverse developmental roles such as differentiation, cell-cell recognition, embryogenesis and programmed cell death. This chain is Classical arabinogalactan protein 1 (AGP1), found in Arabidopsis thaliana (Mouse-ear cress).